A 467-amino-acid polypeptide reads, in one-letter code: Fumarate hydratase class II (467 aa).

Residues 98–100 (SGT), arginine 126, 129–132 (HPND), 139–141 (SSN), and threonine 187 contribute to the substrate site. Catalysis depends on histidine 188, which acts as the Proton donor/acceptor. Serine 318 is an active-site residue. Substrate-binding positions include serine 319 and 324–326 (KVN).

It belongs to the class-II fumarase/aspartase family. Fumarase subfamily. In terms of assembly, homotetramer.

It localises to the cytoplasm. It catalyses the reaction (S)-malate = fumarate + H2O. Its pathway is carbohydrate metabolism; tricarboxylic acid cycle; (S)-malate from fumarate: step 1/1. Its activity is regulated as follows. Inhibited by ATP, citrate and S-2,3-dicarboxyaziridine. In terms of biological role, involved in the TCA cycle. FumC seems to be a backup enzyme for FumA under conditions of iron limitation and oxidative stress. Catalyzes the stereospecific interconversion of fumarate to L-malate. The polypeptide is Fumarate hydratase class II (Escherichia coli (strain K12)).